The primary structure comprises 629 residues: tRNA uridine 5-carboxymethylaminomethyl modification enzyme MnmG (629 aa).

FAD-binding positions include 13–18 (GGGHAG), Val-125, and Ser-180. 273–287 (GPRYCPSIEDKVMRF) contributes to the NAD(+) binding site. Gln-370 lines the FAD pocket.

Belongs to the MnmG family. As to quaternary structure, homodimer. Heterotetramer of two MnmE and two MnmG subunits. Requires FAD as cofactor.

It is found in the cytoplasm. Its function is as follows. NAD-binding protein involved in the addition of a carboxymethylaminomethyl (cmnm) group at the wobble position (U34) of certain tRNAs, forming tRNA-cmnm(5)s(2)U34. In Sodalis glossinidius (strain morsitans), this protein is tRNA uridine 5-carboxymethylaminomethyl modification enzyme MnmG.